We begin with the raw amino-acid sequence, 385 residues long: Outer membrane protein P2 (385 aa).

A signal peptide spans Met1 to Ala20.

It belongs to the Gram-negative porin family. Homotrimer.

The protein resides in the cell outer membrane. Forms pores that allow passive diffusion of small molecules across the outer membrane. This chain is Outer membrane protein P2 (ompP2), found in Haemophilus influenzae.